Consider the following 366-residue polypeptide: NADH-quinone oxidoreductase subunit D (366 aa).

It belongs to the complex I 49 kDa subunit family. NDH-1 is composed of 14 different subunits. Subunits NuoB, C, D, E, F, and G constitute the peripheral sector of the complex.

It localises to the cell membrane. The catalysed reaction is a quinone + NADH + 5 H(+)(in) = a quinol + NAD(+) + 4 H(+)(out). In terms of biological role, NDH-1 shuttles electrons from NADH, via FMN and iron-sulfur (Fe-S) centers, to quinones in the respiratory chain. The immediate electron acceptor for the enzyme in this species is believed to be a menaquinone. Couples the redox reaction to proton translocation (for every two electrons transferred, four hydrogen ions are translocated across the cytoplasmic membrane), and thus conserves the redox energy in a proton gradient. The sequence is that of NADH-quinone oxidoreductase subunit D from Bacillus anthracis.